Consider the following 278-residue polypeptide: Diaminopimelate epimerase (278 aa).

Residues Asn-13, Gln-46, and Asn-67 each coordinate substrate. Catalysis depends on Cys-76, which acts as the Proton donor. Residues 77 to 78, Asn-160, Asn-193, and 211 to 212 each bind substrate; these read GN and ER. Residue Cys-220 is the Proton acceptor of the active site. Position 221–222 (221–222) interacts with substrate; the sequence is GT.

It belongs to the diaminopimelate epimerase family. As to quaternary structure, homodimer.

It localises to the cytoplasm. It carries out the reaction (2S,6S)-2,6-diaminopimelate = meso-2,6-diaminopimelate. It participates in amino-acid biosynthesis; L-lysine biosynthesis via DAP pathway; DL-2,6-diaminopimelate from LL-2,6-diaminopimelate: step 1/1. Functionally, catalyzes the stereoinversion of LL-2,6-diaminopimelate (L,L-DAP) to meso-diaminopimelate (meso-DAP), a precursor of L-lysine and an essential component of the bacterial peptidoglycan. The protein is Diaminopimelate epimerase of Thioalkalivibrio sulfidiphilus (strain HL-EbGR7).